Here is a 251-residue protein sequence, read N- to C-terminus: Small ribosomal subunit protein uS2 (251 aa).

This sequence belongs to the universal ribosomal protein uS2 family.

This Nitrosomonas europaea (strain ATCC 19718 / CIP 103999 / KCTC 2705 / NBRC 14298) protein is Small ribosomal subunit protein uS2.